A 304-amino-acid polypeptide reads, in one-letter code: Protease HtpX homolog (304 aa).

Transmembrane regions (helical) follow at residues 14-34 (VFIILGFFIFVLMVGAAIGII) and 39-59 (YLNGLILAAVIGAFYILIMVM). Zn(2+) is bound at residue histidine 144. Residue glutamate 145 is part of the active site. Histidine 148 is a Zn(2+) binding site. Transmembrane regions (helical) follow at residues 159–179 (IAIALVAVIAILSDIAMRMIF) and 202–222 (AIIYIVALIFVILAPIIATAI). Residue glutamate 231 coordinates Zn(2+).

It belongs to the peptidase M48B family. Zn(2+) serves as cofactor.

Its subcellular location is the cell membrane. This chain is Protease HtpX homolog, found in Listeria monocytogenes serotype 4a (strain HCC23).